Reading from the N-terminus, the 203-residue chain is ATP-dependent Clp protease proteolytic subunit 2 (203 aa).

The active-site Nucleophile is the Ser101. The active site involves His126.

The protein belongs to the peptidase S14 family. Fourteen ClpP subunits assemble into 2 heptameric rings which stack back to back to give a disk-like structure with a central cavity, resembling the structure of eukaryotic proteasomes.

The protein resides in the cytoplasm. It carries out the reaction Hydrolysis of proteins to small peptides in the presence of ATP and magnesium. alpha-casein is the usual test substrate. In the absence of ATP, only oligopeptides shorter than five residues are hydrolyzed (such as succinyl-Leu-Tyr-|-NHMec, and Leu-Tyr-Leu-|-Tyr-Trp, in which cleavage of the -Tyr-|-Leu- and -Tyr-|-Trp bonds also occurs).. In terms of biological role, cleaves peptides in various proteins in a process that requires ATP hydrolysis. Has a chymotrypsin-like activity. Plays a major role in the degradation of misfolded proteins. The sequence is that of ATP-dependent Clp protease proteolytic subunit 2 from Prochlorococcus marinus (strain MIT 9312).